The primary structure comprises 355 residues: Trans-3-hydroxy-L-proline dehydratase (355 aa).

The active-site Proton acceptor is Cys-111. Residues 112–113 (GH) and 276–277 (GS) each bind substrate.

This sequence belongs to the proline racemase family. In terms of assembly, homodimer.

The enzyme catalyses trans-3-hydroxy-L-proline = 1-pyrroline-2-carboxylate + H2O. Its function is as follows. Catalyzes the dehydration of trans-3-hydroxy-L-proline (t3LHyp) to Delta(1)-pyrroline-2-carboxylate (Pyr2C). Together with LhpI, is involved in a metabolic pathway that converts t3LHyp to L-proline. The chain is Trans-3-hydroxy-L-proline dehydratase from Colwellia psychrerythraea (strain 34H / ATCC BAA-681) (Vibrio psychroerythus).